We begin with the raw amino-acid sequence, 675 residues long: MRVLSVRFRVLLACLALVLPNSETNFLSKERASQVLVRKRRANTLLEETKKGNLERECIEELCNKEEAREVFENNPETDYFYPKYLGCLGAFRVGAFSAARQSANAYPDLRSCVNAIPDQCDPMPCNEDGYLSCKDGQGAFTCICKPGWQGDKCQFDINECKDPSNINGGCSQTCDNTPGSYHCSCKIGFAMLTNKKDCKDVDECSLKPSVCGTAVCKNIPGDFECECPNGYRYDPSSKSCKDVDECSENTCAQLCVNYPGGYSCYCDGKKGFKLAQDQRSCEGIPVCLSLDLDKNYELLYLAEQFAGVVLYLKFRLPDITRFSAEFDFRTYDSEGIILYAESLDHSNWLLIALREGKIEVQFKNEFSTQITTGGNVINNGIWNMVSVEELDDSVSIKIAKEAVMNINKLGSLFKPTDGFLDTKIYFAGLPRKVESALIKPINPRLDGCIRGWNLMKQGALGAKEIVEGKQNKHCFLTVEKGSYYPGSGIAQFSIDYNNVTNAEGWQINVTLNIRPSTGTGVMLALVSGDTVPFALSLVDSGSGTSQDILVFVENSVAAHLEAITLCSEQPSQLKCNINRNGLELWTPVRKDVIYSKDLQRQLAILDKTMKGTVATYLGGVPDISFSATPVNAFYSGCMEVNINGVQLDLDEAISKHNDIRAHSCPSVRKIQKNF.

An N-terminal signal peptide occupies residues 1–24 (MRVLSVRFRVLLACLALVLPNSET). The propeptide occupies 25–41 (NFLSKERASQVLVRKRR). Residues 42–87 (ANTLLEETKKGNLERECIEELCNKEEAREVFENNPETDYFYPKYLG) enclose the Gla domain. E47, E48, E55, E57, E60, E61, E66, E67, E70, E73, and E77 each carry 4-carboxyglutamate. C58 and C63 are oxidised to a cystine. The tract at residues 88-116 (CLGAFRVGAFSAARQSANAYPDLRSCVNA) is thrombin-sensitive. The EGF-like 1 domain occupies 117 to 155 (IPDQCDPMPCNEDGYLSCKDGQGAFTCICKPGWQGDKCQ). 13 cysteine pairs are disulfide-bonded: C121–C134, C126–C143, C145–C154, C161–C175, C171–C184, C186–C199, C205–C217, C212–C226, C228–C241, C247–C256, C252–C265, C267–C282, and C449–C475. Position 136 is a (3R)-3-hydroxyaspartate (D136). Residues 157-200 (DINECKDPSNINGGCSQTCDNTPGSYHCSCKIGFAMLTNKKDCK) enclose the EGF-like 2; calcium-binding domain. The EGF-like 3; calcium-binding domain maps to 201 to 242 (DVDECSLKPSVCGTAVCKNIPGDFECECPNGYRYDPSSKSCK). The 41-residue stretch at 243–283 (DVDECSENTCAQLCVNYPGGYSCYCDGKKGFKLAQDQRSCE) folds into the EGF-like 4; calcium-binding domain. Laminin G-like domains lie at 299–475 (LLYL…NKHC) and 484–665 (YYPG…AHSC). N-linked (GlcNAc...) asparagine glycans are attached at residues N499 and N509.

Post-translationally, the iron and 2-oxoglutarate dependent 3-hydroxylation of aspartate and asparagine is (R) stereospecific within EGF domains. Plasma.

The protein resides in the secreted. Its function is as follows. Anticoagulant plasma protein; it is a cofactor to activated protein C in the degradation of coagulation factors Va and VIIIa. It helps to prevent coagulation and stimulating fibrinolysis. The chain is Vitamin K-dependent protein S (Pros1) from Rattus norvegicus (Rat).